The chain runs to 328 residues: DNA-directed RNA polymerase subunit alpha (328 aa).

The tract at residues 1 to 230 (MIQITGRKFK…IILDHFMFIE (230 aa)) is alpha N-terminal domain (alpha-NTD). Residues 257–328 (PEDVMSKKVE…FGLSLRKGDK (72 aa)) are alpha C-terminal domain (alpha-CTD).

This sequence belongs to the RNA polymerase alpha chain family. As to quaternary structure, homodimer. The RNAP catalytic core consists of 2 alpha, 1 beta, 1 beta' and 1 omega subunit. When a sigma factor is associated with the core the holoenzyme is formed, which can initiate transcription.

The catalysed reaction is RNA(n) + a ribonucleoside 5'-triphosphate = RNA(n+1) + diphosphate. Functionally, DNA-dependent RNA polymerase catalyzes the transcription of DNA into RNA using the four ribonucleoside triphosphates as substrates. This is DNA-directed RNA polymerase subunit alpha from Fervidobacterium nodosum (strain ATCC 35602 / DSM 5306 / Rt17-B1).